We begin with the raw amino-acid sequence, 229 residues long: Large ribosomal subunit protein uL1 (229 aa).

The protein belongs to the universal ribosomal protein uL1 family. In terms of assembly, part of the 50S ribosomal subunit.

Its function is as follows. Binds directly to 23S rRNA. The L1 stalk is quite mobile in the ribosome, and is involved in E site tRNA release. Functionally, protein L1 is also a translational repressor protein, it controls the translation of the L11 operon by binding to its mRNA. The polypeptide is Large ribosomal subunit protein uL1 (Pelagibacter ubique (strain HTCC1062)).